The chain runs to 150 residues: Transcriptional repressor NrdR (150 aa).

A zinc finger lies at 3–34; it reads CPFCGYEDTFVIDTREIEDQKVIRRRRECPNC. The region spanning 49 to 139 is the ATP-cone domain; that stretch reads IMVIKKDGRR…VYQEFSSLEE (91 aa).

This sequence belongs to the NrdR family. It depends on Zn(2+) as a cofactor.

Functionally, negatively regulates transcription of bacterial ribonucleotide reductase nrd genes and operons by binding to NrdR-boxes. This Dictyoglomus turgidum (strain DSM 6724 / Z-1310) protein is Transcriptional repressor NrdR.